The following is a 192-amino-acid chain: UPF0301 protein BMA10247_1859 (192 aa).

Belongs to the UPF0301 (AlgH) family.

This chain is UPF0301 protein BMA10247_1859, found in Burkholderia mallei (strain NCTC 10247).